A 751-amino-acid polypeptide reads, in one-letter code: E3 ubiquitin-protein ligase SMURF2 (751 aa).

The region spanning 1-119 (MSNQGSRRNG…TGYQRLDLCK (119 aa)) is the C2 domain. Residues 157 to 190 (NDLPDGWEERRTASGRIQYLNHITRTTQWERPTR) enclose the WW 1 domain. Polar residues predominate over residues 214–226 (GTNGASCGQTSDP). The disordered stretch occupies residues 214–236 (GTNGASCGQTSDPRISERRVRSQ). WW domains are found at residues 251–284 (PDLP…DPRV) and 297–330 (GPLP…DPRL). One can recognise an HECT domain in the interval 417 to 751 (RPKDLWKRLM…IEETCGFAVE (335 aa)). Cys719 functions as the Glycyl thioester intermediate in the catalytic mechanism.

The protein localises to the nucleus. It localises to the cytoplasm. Its subcellular location is the cell membrane. It is found in the membrane raft. The enzyme catalyses S-ubiquitinyl-[E2 ubiquitin-conjugating enzyme]-L-cysteine + [acceptor protein]-L-lysine = [E2 ubiquitin-conjugating enzyme]-L-cysteine + N(6)-ubiquitinyl-[acceptor protein]-L-lysine.. The protein operates within protein modification; protein ubiquitination. In terms of biological role, E3 ubiquitin-protein ligase which accepts ubiquitin from an E2 ubiquitin-conjugating enzyme in the form of a thioester and then directly transfers the ubiquitin to targeted substrates. The chain is E3 ubiquitin-protein ligase SMURF2 (smurf2) from Xenopus laevis (African clawed frog).